The sequence spans 310 residues: Ribosomal RNA large subunit methyltransferase F (310 aa).

The protein belongs to the methyltransferase superfamily. METTL16/RlmF family.

The protein localises to the cytoplasm. It catalyses the reaction adenosine(1618) in 23S rRNA + S-adenosyl-L-methionine = N(6)-methyladenosine(1618) in 23S rRNA + S-adenosyl-L-homocysteine + H(+). Specifically methylates the adenine in position 1618 of 23S rRNA. This is Ribosomal RNA large subunit methyltransferase F from Pseudoalteromonas translucida (strain TAC 125).